The following is a 923-amino-acid chain: RNA polymerase-associated protein RapA (923 aa).

In terms of domain architecture, Helicase ATP-binding spans 162–332; that stretch reads EVGNRVNPRV…FARLRLLDPE (171 aa). 175–182 provides a ligand contact to ATP; the sequence is DEVGLGKT. The DEAH box signature appears at 278–281; that stretch reads DEAH. In terms of domain architecture, Helicase C-terminal spans 443–597; the sequence is KIDWLIDFLK…TCPMGMALFS (155 aa).

Belongs to the SNF2/RAD54 helicase family. RapA subfamily. In terms of assembly, interacts with the RNAP. Has a higher affinity for the core RNAP than for the holoenzyme. Its ATPase activity is stimulated by binding to RNAP.

Functionally, transcription regulator that activates transcription by stimulating RNA polymerase (RNAP) recycling in case of stress conditions such as supercoiled DNA or high salt concentrations. Probably acts by releasing the RNAP, when it is trapped or immobilized on tightly supercoiled DNA. Does not activate transcription on linear DNA. Probably not involved in DNA repair. This chain is RNA polymerase-associated protein RapA, found in Haemophilus influenzae (strain ATCC 51907 / DSM 11121 / KW20 / Rd).